The primary structure comprises 293 residues: Cyclohexadienyl dehydrogenase (293 aa).

Residues 5–293 (KHIAIIGLGL…ALKTDHDIRP (289 aa)) enclose the Prephenate/arogenate dehydrogenase domain. 6-30 (HIAIIGLGLIGSSAARATKAYCPDV) provides a ligand contact to NAD(+).

Belongs to the prephenate/arogenate dehydrogenase family. As to quaternary structure, homodimer.

It carries out the reaction L-arogenate + NAD(+) = L-tyrosine + CO2 + NADH. The catalysed reaction is prephenate + NAD(+) = 3-(4-hydroxyphenyl)pyruvate + CO2 + NADH. The protein operates within amino-acid biosynthesis; L-tyrosine biosynthesis; (4-hydroxyphenyl)pyruvate from prephenate (NAD(+) route): step 1/1. Its pathway is amino-acid biosynthesis; L-tyrosine biosynthesis; L-tyrosine from L-arogenate (NAD(+) route): step 1/1. With respect to regulation, insensitive to feedback inhibition by L-tyrosine. In terms of biological role, can function as either prephenate dehydrogenase or as arogenate dehydrogenase in the biosynthesis of L-tyrosine. Catalyzes two analogous reactions: converts prephenate to 4-hydroxyphenylpyruvate and transforms L-arogenate to L-tyrosine. Is not able to utilize NADP(+) instead of NAD(+) as cosubstrate. The protein is Cyclohexadienyl dehydrogenase of Zymomonas mobilis subsp. mobilis (strain ATCC 31821 / ZM4 / CP4).